Reading from the N-terminus, the 455-residue chain is Argininosuccinate lyase (455 aa).

It belongs to the lyase 1 family. Argininosuccinate lyase subfamily.

The protein localises to the cytoplasm. It carries out the reaction 2-(N(omega)-L-arginino)succinate = fumarate + L-arginine. It participates in amino-acid biosynthesis; L-arginine biosynthesis; L-arginine from L-ornithine and carbamoyl phosphate: step 3/3. This Roseiflexus castenholzii (strain DSM 13941 / HLO8) protein is Argininosuccinate lyase.